A 101-amino-acid chain; its full sequence is Protein Tat (101 aa).

Positions 1 to 24 (MEPVDPSLDPWNHPGSQPTTPCTK) are interaction with human CREBBP. The tract at residues 1–48 (MEPVDPSLDPWNHPGSQPTTPCTKCYCKRCCFHCQWCFTTKGLGISYG) is transactivation. Residues Cys22, Cys25, and Cys27 each coordinate Zn(2+). The segment at 22 to 37 (CTKCYCKRCCFHCQWC) is cysteine-rich. The residue at position 28 (Lys28) is an N6-acetyllysine; by host PCAF. Zn(2+) is bound by residues Cys30, His33, Cys34, and Cys37. The tract at residues 38–48 (FTTKGLGISYG) is core. Residues 48-58 (GRKKRRQRHRT) are compositionally biased toward basic residues. A disordered region spans residues 48 to 101 (GRKKRRQRHRTPQSSQVHQNSLPKQPLSQARGDPTGPKESKKEVESKAKTDPCA). Positions 49 to 57 (RKKRRQRHR) match the Nuclear localization signal, RNA-binding (TAR), and protein transduction motif. Residues 49–86 (RKKRRQRHRTPQSSQVHQNSLPKQPLSQARGDPTGPKE) form an interaction with the host capping enzyme RNGTT region. N6-acetyllysine; by host EP300 and GCN5L2 occurs at positions 50 and 51. Residues Arg52 and Arg53 each carry the asymmetric dimethylarginine; by host PRMT6 modification. Residues 59 to 75 (PQSSQVHQNSLPKQPLS) are compositionally biased toward polar residues. Residue Lys71 forms a Glycyl lysine isopeptide (Lys-Gly) (interchain with G-Cter in ubiquitin) linkage. Residues 78-80 (RGD) carry the Cell attachment site motif. A compositionally biased stretch (basic and acidic residues) spans 83 to 101 (GPKESKKEVESKAKTDPCA).

This sequence belongs to the lentiviruses Tat family. Interacts with host CCNT1. Associates with the P-TEFb complex composed at least of Tat, P-TEFb (CDK9 and CCNT1), TAR RNA, RNA Pol II. Recruits the HATs CREBBP, TAF1/TFIID, EP300, PCAF and GCN5L2. Interacts with host KAT5/Tip60; this interaction targets the latter to degradation. Interacts with the host deacetylase SIRT1. Interacts with host capping enzyme RNGTT; this interaction stimulates RNGTT. Binds to host KDR, and to the host integrins ITGAV/ITGB3 and ITGA5/ITGB1. Interacts with host KPNB1/importin beta-1 without previous binding to KPNA1/importin alpha-1. Interacts with EIF2AK2. Interacts with host nucleosome assembly protein NAP1L1; this interaction may be required for the transport of Tat within the nucleus, since the two proteins interact at the nuclear rim. Interacts with host C1QBP/SF2P32; this interaction involves lysine-acetylated Tat. Interacts with the host chemokine receptors CCR2, CCR3 and CXCR4. Interacts with host DPP4/CD26; this interaction may trigger an anti-proliferative effect. Interacts with host LDLR. Interacts with the host extracellular matrix metalloproteinase MMP1. Interacts with host PRMT6; this interaction mediates Tat's methylation. Interacts with, and is ubiquitinated by MDM2/Hdm2. Interacts with host PSMC3 and HTATIP2. Interacts with STAB1; this interaction may overcome SATB1-mediated repression of IL2 and IL2RA (interleukin) in T cells by binding to the same domain than HDAC1. Interacts (when acetylated) with human CDK13, thereby increasing HIV-1 mRNA splicing and promoting the production of the doubly spliced HIV-1 protein Nef. Interacts with host TBP; this interaction modulates the activity of transcriptional pre-initiation complex. Interacts with host RELA. Interacts with host PLSCR1; this interaction negatively regulates Tat transactivation activity by altering its subcellular distribution. Post-translationally, asymmetrical arginine methylation by host PRMT6 seems to diminish the transactivation capacity of Tat and affects the interaction with host CCNT1. Acetylation by EP300, CREBBP, GCN5L2/GCN5 and PCAF regulates the transactivation activity of Tat. EP300-mediated acetylation of Lys-50 promotes dissociation of Tat from the TAR RNA through the competitive binding to PCAF's bromodomain. In addition, the non-acetylated Tat's N-terminus can also interact with PCAF. PCAF-mediated acetylation of Lys-28 enhances Tat's binding to CCNT1. Lys-50 is deacetylated by SIRT1. In terms of processing, polyubiquitination by host MDM2 does not target Tat to degradation, but activates its transactivation function and fosters interaction with CCNT1 and TAR RNA. Post-translationally, phosphorylated by EIF2AK2 on serine and threonine residues adjacent to the basic region important for TAR RNA binding and function. Phosphorylation of Tat by EIF2AK2 is dependent on the prior activation of EIF2AK2 by dsRNA.

The protein resides in the host nucleus. The protein localises to the host nucleolus. Its subcellular location is the host cytoplasm. It localises to the secreted. Functionally, transcriptional activator that increases RNA Pol II processivity, thereby increasing the level of full-length viral transcripts. Recognizes a hairpin structure at the 5'-LTR of the nascent viral mRNAs referred to as the transactivation responsive RNA element (TAR) and recruits the cyclin T1-CDK9 complex (P-TEFb complex) that will in turn hyperphosphorylate the RNA polymerase II to allow efficient elongation. The CDK9 component of P-TEFb and other Tat-activated kinases hyperphosphorylate the C-terminus of RNA Pol II that becomes stabilized and much more processive. Other factors such as HTATSF1/Tat-SF1, SUPT5H/SPT5, and HTATIP2 are also important for Tat's function. Besides its effect on RNA Pol II processivity, Tat induces chromatin remodeling of proviral genes by recruiting the histone acetyltransferases (HATs) CREBBP, EP300 and PCAF to the chromatin. This also contributes to the increase in proviral transcription rate, especially when the provirus integrates in transcriptionally silent region of the host genome. To ensure maximal activation of the LTR, Tat mediates nuclear translocation of NF-kappa-B by interacting with host RELA. Through its interaction with host TBP, Tat may also modulate transcription initiation. Tat can reactivate a latently infected cell by penetrating in it and transactivating its LTR promoter. In the cytoplasm, Tat is thought to act as a translational activator of HIV-1 mRNAs. Extracellular circulating Tat can be endocytosed by surrounding uninfected cells via the binding to several surface receptors such as CD26, CXCR4, heparan sulfate proteoglycans (HSPG) or LDLR. Neurons are rarely infected, but they internalize Tat via their LDLR. Through its interaction with nuclear HATs, Tat is potentially able to control the acetylation-dependent cellular gene expression. Modulates the expression of many cellular genes involved in cell survival, proliferation or in coding for cytokines or cytokine receptors. Tat plays a role in T-cell and neurons apoptosis. Tat induced neurotoxicity and apoptosis probably contribute to neuroAIDS. Circulating Tat also acts as a chemokine-like and/or growth factor-like molecule that binds to specific receptors on the surface of the cells, affecting many cellular pathways. In the vascular system, Tat binds to ITGAV/ITGB3 and ITGA5/ITGB1 integrins dimers at the surface of endothelial cells and competes with bFGF for heparin-binding sites, leading to an excess of soluble bFGF. This is Protein Tat from Human immunodeficiency virus type 1 group M subtype F1 (isolate VI850) (HIV-1).